A 424-amino-acid polypeptide reads, in one-letter code: Serine hydroxymethyltransferase (424 aa).

(6S)-5,6,7,8-tetrahydrofolate contacts are provided by residues leucine 118 and 122–124; that span reads GHL. Position 227 is an N6-(pyridoxal phosphate)lysine (lysine 227). Residues glutamate 243 and 351–353 each bind (6S)-5,6,7,8-tetrahydrofolate; that span reads SPF.

It belongs to the SHMT family. Homodimer. Pyridoxal 5'-phosphate is required as a cofactor.

It localises to the cytoplasm. It catalyses the reaction (6R)-5,10-methylene-5,6,7,8-tetrahydrofolate + glycine + H2O = (6S)-5,6,7,8-tetrahydrofolate + L-serine. The protein operates within one-carbon metabolism; tetrahydrofolate interconversion. It participates in amino-acid biosynthesis; glycine biosynthesis; glycine from L-serine: step 1/1. Catalyzes the reversible interconversion of serine and glycine with tetrahydrofolate (THF) serving as the one-carbon carrier. This reaction serves as the major source of one-carbon groups required for the biosynthesis of purines, thymidylate, methionine, and other important biomolecules. Also exhibits THF-independent aldolase activity toward beta-hydroxyamino acids, producing glycine and aldehydes, via a retro-aldol mechanism. This Thermosipho africanus (strain TCF52B) protein is Serine hydroxymethyltransferase.